Reading from the N-terminus, the 35-residue chain is Basic endochitinase CH1 (35 aa).

This sequence belongs to the glycosyl hydrolase 19 family. Chitinase class I subfamily.

It carries out the reaction Random endo-hydrolysis of N-acetyl-beta-D-glucosaminide (1-&gt;4)-beta-linkages in chitin and chitodextrins.. Its function is as follows. Defense against chitin-containing fungal pathogens. The protein is Basic endochitinase CH1 of Castanea sativa (Sweet chestnut).